Consider the following 180-residue polypeptide: MVALPTAWCSVALALLVALHEGKSQSAATSEEPPAPSARARGSHLRLRRCSCNSWLDKECVYFCHLDIIWVNTPGQTAPYGLGNPPRRQRRSLPRRCECYSTRDSACVTFCHQKPWPKASAVPGEGSPTDLLWTSKTRTTAGELLRRLRDIFAAKRNFTRHQQQKATREPESSHSRWRKR.

Positions 1–26 (MVALPTAWCSVALALLVALHEGKSQS) are cleaved as a signal peptide. A propeptide spanning residues 27-47 (AATSEEPPAPSARARGSHLRL) is cleaved from the precursor. Intrachain disulfides connect Cys50/Cys64 and Cys52/Cys60. Positions 71–180 (VNTPGQTAPY…ESSHSRWRKR (110 aa)) are excised as a propeptide. An endothelin-like region spans residues 97–112 (CECYSTRDSACVTFCH). The segment at 157 to 180 (NFTRHQQQKATREPESSHSRWRKR) is disordered.

Belongs to the endothelin/sarafotoxin family.

Its subcellular location is the secreted. Functionally, endothelins are endothelium-derived vasoconstrictor peptides. This is Endothelin-2 (EDN2) from Atelerix albiventris (Middle-African hedgehog).